The chain runs to 158 residues: Tryptophan-rich sensory protein (158 aa).

The next 5 membrane-spanning stretches (helical) occupy residues Trp-5–Leu-25, Trp-44–Ala-65, Ala-73–Gly-93, Met-97–Phe-119, and Trp-124–Phe-144.

Belongs to the TspO/BZRP family. Homodimer.

The protein localises to the membrane. Its subcellular location is the cell inner membrane. Functionally, may play a role in the transmembrane transport of tetrapyrroles and similar compounds, and thereby contribute to the regulation of tetrapyrrole biosynthesis. Binds tetrapyrroles and promotes the photooxidative degradation of protoporphyrin IX. Binds protoporphyrin IX, hemin, and coproporphyrin III, but does not bind delta-aminolevulinic acid. Can bind bilirubin, curcumin, gossypol, retinoic acid, cholesterol and the benzodiazepine receptor agonist PK-11195 (in vitro). Plays a role in the response to low oxygen levels and in the regulation of the biosynthesis of photosynthetic pigments. This Cereibacter sphaeroides (Rhodobacter sphaeroides) protein is Tryptophan-rich sensory protein.